A 269-amino-acid chain; its full sequence is Type II iodothyronine deiodinase (269 aa).

Over 1-9 (MGILSVDLL) the chain is Lumenal. Residues 10–34 (ITLQILPVFFSNCLFLALYDSVILL) traverse the membrane as a helical; Signal-anchor for type III membrane protein segment. Residues 35-269 (KHVVLLLSRS…KNFSKRUKLD (235 aa)) are Cytoplasmic-facing. The tract at residues 83–103 (NSSVVHVSSPEGGDTSGNGAQ) is disordered. The active site involves selenocysteine 133. Residues selenocysteine 133 and selenocysteine 266 are each a non-standard amino acid (selenocysteine).

The protein belongs to the iodothyronine deiodinase family. As to quaternary structure, predominantly monomer. Can form homodimers but homodimerization is not essential for enzyme activity. Interacts with USP20 and USP33. Interacts with MARCHF6. Post-translationally, ubiquitinated by MARCHF6, leading to its degradation by the proteasome. Deubiquitinated by USP20 and USP33. As to expression, highly expressed in thyroid, mammary and pituitary glands, then in hypothalamus. Low levels detected in diaphragm, heart, kidney and lung.

The protein localises to the endoplasmic reticulum membrane. It carries out the reaction 3,3',5-triiodo-L-thyronine + iodide + A + H(+) = L-thyroxine + AH2. The enzyme catalyses 3,3'-diiodo-L-thyronine + iodide + A + H(+) = 3,3',5'-triiodo-L-thyronine + AH2. It catalyses the reaction 3'-iodo-L-thyronine + iodide + A + H(+) = 3',5'-diiodo-L-thyronine + AH2. The catalysed reaction is 3,3'-diiodothyronamine + iodide + A + H(+) = 3,3',5'-triiodothyronamine + AH2. It carries out the reaction 3'-iodothyronamine + iodide + A + H(+) = 3',5'-diiodothyronamine + AH2. Plays a crucial role in the metabolism of thyroid hormones (TH) and has specific roles in TH activation and inactivation by deiodination. Catalyzes the deiodination of L-thyroxine (T4) to 3,5,3'-triiodothyronine (T3), 3,3',5'-triiodothyronine (rT3) to 3,3'-diiodothyronine (3,3'-T2) and 3',5'-diiodothyronine (3',5'-T2) to 3'-monoiodothyronine (3'-T1) via outer-ring deiodination (ORD). Catalyzes the phenolic ring deiodinations of 3,3',5'-triiodothyronamine and 3',5'- diiodothyronamine. The protein is Type II iodothyronine deiodinase (DIO2) of Bos taurus (Bovine).